We begin with the raw amino-acid sequence, 205 residues long: Holliday junction branch migration complex subunit RuvA (205 aa).

A domain I region spans residues 1–64 (MIGKLKGVID…EDQIKLFGFR (64 aa)). Positions 65–143 (SDIEREWFRL…AFANVDPAVV (79 aa)) are domain II. The tract at residues 144–154 (HLAGAVDDDRA) is flexible linker. The domain III stretch occupies residues 154–205 (APRPVKDAISALVNLGYGQPQAAAAIASVARDAGEGAETAQLIRLGLKELAK).

It belongs to the RuvA family. Homotetramer. Forms an RuvA(8)-RuvB(12)-Holliday junction (HJ) complex. HJ DNA is sandwiched between 2 RuvA tetramers; dsDNA enters through RuvA and exits via RuvB. An RuvB hexamer assembles on each DNA strand where it exits the tetramer. Each RuvB hexamer is contacted by two RuvA subunits (via domain III) on 2 adjacent RuvB subunits; this complex drives branch migration. In the full resolvosome a probable DNA-RuvA(4)-RuvB(12)-RuvC(2) complex forms which resolves the HJ.

The protein localises to the cytoplasm. Functionally, the RuvA-RuvB-RuvC complex processes Holliday junction (HJ) DNA during genetic recombination and DNA repair, while the RuvA-RuvB complex plays an important role in the rescue of blocked DNA replication forks via replication fork reversal (RFR). RuvA specifically binds to HJ cruciform DNA, conferring on it an open structure. The RuvB hexamer acts as an ATP-dependent pump, pulling dsDNA into and through the RuvAB complex. HJ branch migration allows RuvC to scan DNA until it finds its consensus sequence, where it cleaves and resolves the cruciform DNA. The protein is Holliday junction branch migration complex subunit RuvA of Afipia carboxidovorans (strain ATCC 49405 / DSM 1227 / KCTC 32145 / OM5) (Oligotropha carboxidovorans).